We begin with the raw amino-acid sequence, 92 residues long: Small ribosomal subunit protein uS15c (92 aa).

Belongs to the universal ribosomal protein uS15 family. In terms of assembly, part of the 30S ribosomal subunit.

The protein localises to the plastid. The protein resides in the chloroplast. This Guizotia abyssinica (Niger) protein is Small ribosomal subunit protein uS15c (rps15).